Reading from the N-terminus, the 246-residue chain is tRNA (guanine-N(1)-)-methyltransferase (246 aa).

S-adenosyl-L-methionine contacts are provided by residues Gly-114 and 134 to 139 (IGDYIL).

It belongs to the RNA methyltransferase TrmD family. As to quaternary structure, homodimer.

The protein localises to the cytoplasm. It catalyses the reaction guanosine(37) in tRNA + S-adenosyl-L-methionine = N(1)-methylguanosine(37) in tRNA + S-adenosyl-L-homocysteine + H(+). In terms of biological role, specifically methylates guanosine-37 in various tRNAs. This chain is tRNA (guanine-N(1)-)-methyltransferase, found in Coxiella burnetii (strain RSA 331 / Henzerling II).